The sequence spans 99 residues: Endothelin receptor type B (99 aa).

Topologically, residues 1-8 are extracellular; the sequence is PFGAEMCK. The cysteines at positions 7 and 88 are disulfide-linked. A helical membrane pass occupies residues 9–30; that stretch reads LVPFIQKASVGITVLSLCALSI. Residues 31–51 lie on the Cytoplasmic side of the membrane; the sequence is DRYRAVASWSRIKGIGIPKWT. The helical transmembrane segment at 52 to 76 threads the bilayer; the sequence is AVEIVLIWVVSVVLAVPEAIGFDMI. Residues 77–99 are Extracellular-facing; the sequence is TMDYKGSYLRICLLHPVQKTAFM.

The protein belongs to the G-protein coupled receptor 1 family. Endothelin receptor subfamily. EDNRB sub-subfamily.

Its subcellular location is the cell membrane. Functionally, non-specific receptor for endothelin 1, 2, and 3. Mediates its action by association with G proteins that activate a phosphatidylinositol-calcium second messenger system. The polypeptide is Endothelin receptor type B (EDNRB) (Macaca fascicularis (Crab-eating macaque)).